The chain runs to 863 residues: Transforming growth factor-beta receptor-associated protein 1 homolog (863 aa).

The CNH domain occupies 23–297 (RINIECIECC…QLLQDFEGKV (275 aa)). The CHCR repeat unit spans residues 564-729 (RPTSEERRGQ…LLSVYLDPDV (166 aa)).

Belongs to the TRAP1 family. In terms of assembly, component of the putative class C core vacuole/endosome tethering (CORVET) complex.

The protein resides in the cytoplasm. Its subcellular location is the early endosome. Plays a role in the TGF-beta signaling pathway. Its function is as follows. Plays a role in vesicle-mediated protein trafficking of the endocytic membrane transport pathway. Believed to act as a component of the putative CORVET endosomal tethering complexes which is proposed to be involved in the Rab5-to-Rab7 endosome conversion probably implicating MON1A/B, and via binding SNAREs and SNARE complexes to mediate tethering and docking events during SNARE-mediated membrane fusion. The CORVET complex is proposed to function as a Rab5 effector to mediate early endosome fusion probably in specific endosome subpopulations. In Danio rerio (Zebrafish), this protein is Transforming growth factor-beta receptor-associated protein 1 homolog (tgfbrap1).